The chain runs to 324 residues: tRNA U34 carboxymethyltransferase (324 aa).

Carboxy-S-adenosyl-L-methionine-binding positions include lysine 91, tryptophan 105, lysine 110, glycine 130, aspartate 152–serine 154, isoleucine 181–glutamate 182, methionine 196, tyrosine 200, and arginine 315.

The protein belongs to the class I-like SAM-binding methyltransferase superfamily. CmoB family. Homotetramer.

It catalyses the reaction carboxy-S-adenosyl-L-methionine + 5-hydroxyuridine(34) in tRNA = 5-carboxymethoxyuridine(34) in tRNA + S-adenosyl-L-homocysteine + H(+). Catalyzes carboxymethyl transfer from carboxy-S-adenosyl-L-methionine (Cx-SAM) to 5-hydroxyuridine (ho5U) to form 5-carboxymethoxyuridine (cmo5U) at position 34 in tRNAs. The chain is tRNA U34 carboxymethyltransferase from Aliivibrio salmonicida (strain LFI1238) (Vibrio salmonicida (strain LFI1238)).